A 378-amino-acid polypeptide reads, in one-letter code: tRNA-specific 2-thiouridylase MnmA (378 aa).

ATP contacts are provided by residues 9 to 16 and methionine 35; that span reads GVSGGVDS. The interval 94–96 is interaction with target base in tRNA; the sequence is NPD. Cysteine 99 acts as the Nucleophile in catalysis. The cysteines at positions 99 and 195 are disulfide-linked. Residue glycine 123 participates in ATP binding. Residues 145-147 form an interaction with tRNA region; it reads KDQ. Cysteine 195 functions as the Cysteine persulfide intermediate in the catalytic mechanism. An interaction with tRNA region spans residues 307-308; it reads RY.

It belongs to the MnmA/TRMU family.

The protein resides in the cytoplasm. It catalyses the reaction S-sulfanyl-L-cysteinyl-[protein] + uridine(34) in tRNA + AH2 + ATP = 2-thiouridine(34) in tRNA + L-cysteinyl-[protein] + A + AMP + diphosphate + H(+). Functionally, catalyzes the 2-thiolation of uridine at the wobble position (U34) of tRNA, leading to the formation of s(2)U34. The sequence is that of tRNA-specific 2-thiouridylase MnmA from Xanthomonas oryzae pv. oryzae (strain PXO99A).